A 1382-amino-acid chain; its full sequence is Hepatocyte growth factor receptor (1382 aa).

Residues 1-24 form the signal peptide; sequence MKSPAVLAPGILVFLFTFVQKSDG. Over 25–933 the chain is Extracellular; it reads ECKEALVKSR…VIVQPDQNFT (909 aa). Positions 27–516 constitute a Sema domain; the sequence is KEALVKSRMN…TGKKITKIPL (490 aa). The N-linked (GlcNAc...) asparagine glycan is linked to Asn-45. 4 disulfide bridges follow: Cys-95–Cys-101, Cys-98–Cys-160, Cys-133–Cys-141, and Cys-173–Cys-176. Asn-106 carries an N-linked (GlcNAc...) asparagine glycan. N-linked (GlcNAc...) asparagine glycosylation is present at Asn-149. Asn-203 and Asn-359 each carry an N-linked (GlcNAc...) asparagine glycan. Cystine bridges form between Cys-299–Cys-364 and Cys-386–Cys-398. N-linked (GlcNAc...) asparagine glycosylation is found at Asn-400 and Asn-406. Disulfide bonds link Cys-521/Cys-539, Cys-527/Cys-562, Cys-530/Cys-546, and Cys-542/Cys-552. IPT/TIG domains are found at residues 564–656, 658–740, and 743–837; these read PAIY…FSYV, PIIT…FIYR, and PIVY…LIYV. Thr-583 carries an O-linked (Man) threonine glycan. N-linked (GlcNAc...) asparagine glycans are attached at residues Asn-608 and Asn-636. Residues Thr-677 and Thr-762 are each glycosylated (O-linked (Man) threonine). N-linked (GlcNAc...) asparagine glycans are attached at residues Asn-786, Asn-880, and Asn-931. Residues 934–956 traverse the membrane as a helical segment; it reads GLIVGVVSISIILLLLLGLFLWL. At 957–1382 the chain is on the cytoplasmic side; the sequence is KKRKQIKDLG…QDNVNGEGDT (426 aa). Ser-967 carries the phosphoserine modification. A Phosphothreonine modification is found at Thr-978. Ser-991, Ser-998, and Ser-1001 each carry phosphoserine. Tyr-1004 carries the phosphotyrosine modification. The Protein kinase domain occupies 1079–1346; the sequence is VHFNEVIGRG…RISAIFSTFI (268 aa). ATP contacts are provided by residues 1085 to 1093 and Lys-1111; that span reads IGRGHFGCV. Residue Asp-1205 is the Proton acceptor of the active site. Residues 1213–1382 form an interaction with RANBP9 region; the sequence is LDEKFTVKVA…QDNVNGEGDT (170 aa). Position 1231 is a phosphotyrosine (Tyr-1231). Phosphotyrosine; by autocatalysis is present on residues Tyr-1235 and Tyr-1236. Thr-1290 bears the Phosphothreonine mark. Residues 1321-1360 form an interaction with MUC20 region; that stretch reads WHPKAELRPSFSELVSRISAIFSTFIGEHYVHVNATYVNV. Phosphotyrosine; by autocatalysis occurs at positions 1350 and 1357. Tyr-1366 is subject to Phosphotyrosine.

This sequence belongs to the protein kinase superfamily. Tyr protein kinase family. Heterodimer made of an alpha chain (50 kDa) and a beta chain (145 kDa) which are disulfide linked. Binds PLXNB1. Interacts when phosphorylated with downstream effectors including STAT3, PIK3R1, SRC, PCLG1, GRB2 and GAB1. Interacts with SPSB1, SPSB2 and SPSB4. Interacts with INPP5D/SHIP1. When phosphorylated at Tyr-1357, interacts with INPPL1/SHIP2. Interacts with RANBP9 and RANBP10, as well as SPSB1, SPSB2, SPSB3 and SPSB4. SPSB1 binding occurs in the presence and in the absence of HGF, however HGF treatment has a positive effect on this interaction. Interacts with MUC20; prevents interaction with GRB2 and suppresses hepatocyte growth factor-induced cell proliferation. Interacts with GRB10. Interacts with PTPN1 and PTPN2. Interacts with HSP90AA1 and HSP90AB1; the interaction suppresses MET kinase activity. Interacts with tensin TNS3. Interacts (when phosphorylated) with tensin TNS4 (via SH2 domain); the interaction increases MET protein stability by inhibiting MET endocytosis and subsequent lysosomal degradation. Autophosphorylated in response to ligand binding on Tyr-1235 and Tyr-1236 in the kinase domain leading to further phosphorylation of Tyr-1350 and Tyr-1357 in the C-terminal multifunctional docking site. Dephosphorylated by PTPRJ at Tyr-1350 and Tyr-1366. Dephosphorylated by PTPN1 and PTPN2. In terms of processing, ubiquitinated. Ubiquitination by CBL regulates the receptor stability and activity through proteasomal degradation. Post-translationally, O-mannosylation of IPT/TIG domains by TMEM260 is required for protein maturation. O-mannosylated residues are composed of single mannose glycans that are not elongated or modified.

The protein resides in the membrane. It catalyses the reaction L-tyrosyl-[protein] + ATP = O-phospho-L-tyrosyl-[protein] + ADP + H(+). With respect to regulation, in its inactive state, the C-terminal tail interacts with the catalytic domain and inhibits the kinase activity. Upon ligand binding, the C-terminal tail is displaced and becomes phosphorylated, thus increasing the kinase activity. Its function is as follows. Receptor tyrosine kinase that transduces signals from the extracellular matrix into the cytoplasm by binding to hepatocyte growth factor/HGF ligand. Regulates many physiological processes including proliferation, scattering, morphogenesis and survival. Ligand binding at the cell surface induces autophosphorylation of MET on its intracellular domain that provides docking sites for downstream signaling molecules. Following activation by ligand, interacts with the PI3-kinase subunit PIK3R1, PLCG1, SRC, GRB2, STAT3 or the adapter GAB1. Recruitment of these downstream effectors by MET leads to the activation of several signaling cascades including the RAS-ERK, PI3 kinase-AKT, or PLCgamma-PKC. The RAS-ERK activation is associated with the morphogenetic effects while PI3K/AKT coordinates prosurvival effects. During embryonic development, MET signaling plays a role in gastrulation, development and migration of muscles and neuronal precursors, angiogenesis and kidney formation. In adults, participates in wound healing as well as organ regeneration and tissue remodeling. Also promotes differentiation and proliferation of hematopoietic cells. This is Hepatocyte growth factor receptor (MET) from Muntiacus muntjak (Barking deer).